We begin with the raw amino-acid sequence, 312 residues long: MSDSPKHITVLLHEAVDGLAIKPNGIYVDGTFGRGGHSRLILSKLGEQGRLIAIDRDPRAIAEANTITDPRFQIVHSAFSSIPDICDELNLVGKIDGILLDLGVSSPQLDEAERGFSFMRDGPLDMRMDTTKGLSAMEWLAQVSVDDLAWVLKEFGEERFAKRIAQAVVSYNKSATEKISRTLQLAQIIADVVPFKDKHKHPATRSFQAIRIYINSELDELEKALNSALTVLAPEGRLSIISFHSLEDRMVKQFMRKQSKGETVPKGLPILESELNKNIPLKTVGKAIMPSEAEIEANPRSRSAVLRVAEKR.

S-adenosyl-L-methionine-binding positions include Gly35–His37, Asp55, Phe79, Asp101, and Gln108.

Belongs to the methyltransferase superfamily. RsmH family.

The protein localises to the cytoplasm. The enzyme catalyses cytidine(1402) in 16S rRNA + S-adenosyl-L-methionine = N(4)-methylcytidine(1402) in 16S rRNA + S-adenosyl-L-homocysteine + H(+). Specifically methylates the N4 position of cytidine in position 1402 (C1402) of 16S rRNA. This Glaesserella parasuis serovar 5 (strain SH0165) (Haemophilus parasuis) protein is Ribosomal RNA small subunit methyltransferase H.